We begin with the raw amino-acid sequence, 106 residues long: MSKNFEWITPDSDLLEKEITQIQPPKKYNVVLNNDDYTPMDFVIDVLERFFSHDLDKATQIMLKVHYEGKAICGTYSAEIAETKVAQVTMYSRENEHPLLCTMEQA.

It belongs to the ClpS family. Binds to the N-terminal domain of the chaperone ClpA.

In terms of biological role, involved in the modulation of the specificity of the ClpAP-mediated ATP-dependent protein degradation. In Vibrio vulnificus (strain CMCP6), this protein is ATP-dependent Clp protease adapter protein ClpS.